Consider the following 1257-residue polypeptide: Probable aldehyde oxidase gad-3 (1257 aa).

Residues 4 to 91 (TGIFFNVNGK…KTFVITVEGV (88 aa)) enclose the 2Fe-2S ferredoxin-type domain. The [2Fe-2S] cluster site is built by Cys-43, Cys-48, Cys-51, and Cys-73. In terms of domain architecture, FAD-binding PCMH-type spans 229-459 (LKGDRIELLL…TSLEVHIDAL (231 aa)). The active-site Proton acceptor is Glu-1208.

It belongs to the xanthine dehydrogenase family. [2Fe-2S] cluster serves as cofactor. It depends on FAD as a cofactor. Mo-molybdopterin is required as a cofactor.

It carries out the reaction an aldehyde + O2 + H2O = a carboxylate + H2O2 + H(+). Functionally, may be involved in the metabolism of 1-methylnicotinamide (MNA). Linked to regulation of longevity through generation of reactive oxygen species, where it probably functions in a pathway downstream of the sirtuin sir-2.1 and the nicotinamide N-methyltransferase anmt-1. This chain is Probable aldehyde oxidase gad-3, found in Caenorhabditis elegans.